The primary structure comprises 322 residues: MLELAVQKVVVHPLVLLSVVDHFNRIGKVGNQKRVVGVLLGSWQKKVLDVSNSFAVPFDEDDKDDSVWFLDHDYLENMYGMFKKVNARERIVGWYHTGPKLHKNDIAINELMKRYCPNSVLVIIDVKPKDLGLPTEAYISVEEVHDDGTPTSKTFEHVTSEIGAEEAEEVGVEHLLRDIKDTTVGTLSQRITNQVHGLKGLNSKLLDIRGYLEKVATGKLPINHQIIYQLQDVFNLLPDVSLQEFVKAFYLKTNDQMVVVYLASLIRSVVALHNLINNKIANRDAEKKEGQEKEDSKKDRKDDKEKEKEKSDVKKEEKKEKK.

In terms of domain architecture, MPN spans 9–144; sequence VVVHPLVLLS…TEAYISVEEV (136 aa). Lys-180 participates in a covalent cross-link: Glycyl lysine isopeptide (Lys-Gly) (interchain with G-Cter in ubiquitin). 4 positions are modified to N6-acetyllysine: Lys-204, Lys-214, Lys-314, and Lys-315. The segment at 281–322 is disordered; sequence ANRDAEKKEGQEKEDSKKDRKDDKEKEKEKSDVKKEEKKEKK.

It belongs to the peptidase M67A family. In terms of assembly, component of the 19S proteasome regulatory particle complex. The 26S proteasome consists of a 20S core particle (CP) and two 19S regulatory subunits (RP). The regulatory particle is made of a lid composed of 9 subunits including PSMD7, a base containing 6 ATPases and few additional components. Within the complex, PSMD7 interacts with subunit PSMD4 through their respective MPN domain. Interacts with TRIM5.

In terms of biological role, component of the 26S proteasome, a multiprotein complex involved in the ATP-dependent degradation of ubiquitinated proteins. This complex plays a key role in the maintenance of protein homeostasis by removing misfolded or damaged proteins, which could impair cellular functions, and by removing proteins whose functions are no longer required. Therefore, the proteasome participates in numerous cellular processes, including cell cycle progression, apoptosis, or DNA damage repair. The protein is 26S proteasome non-ATPase regulatory subunit 7 (PSMD7) of Bos taurus (Bovine).